The chain runs to 340 residues: NADH-quinone oxidoreductase subunit H (340 aa).

The next 8 helical transmembrane spans lie at 4 to 24, 78 to 98, 113 to 133, 151 to 171, 184 to 204, 244 to 264, 273 to 293, and 316 to 336; these read TIGI…PLLI, YLFV…WAVI, VLYL…AGWA, VSYE…AGSM, MLHW…IAGI, SMIL…LSPF, IFFV…FLFV, and VLIP…VAHV.

Belongs to the complex I subunit 1 family. In terms of assembly, NDH-1 is composed of 14 different subunits. Subunits NuoA, H, J, K, L, M, N constitute the membrane sector of the complex.

It is found in the cell inner membrane. It carries out the reaction a quinone + NADH + 5 H(+)(in) = a quinol + NAD(+) + 4 H(+)(out). Its function is as follows. NDH-1 shuttles electrons from NADH, via FMN and iron-sulfur (Fe-S) centers, to quinones in the respiratory chain. The immediate electron acceptor for the enzyme in this species is believed to be ubiquinone. Couples the redox reaction to proton translocation (for every two electrons transferred, four hydrogen ions are translocated across the cytoplasmic membrane), and thus conserves the redox energy in a proton gradient. This subunit may bind ubiquinone. This is NADH-quinone oxidoreductase subunit H from Legionella pneumophila (strain Corby).